A 467-amino-acid polypeptide reads, in one-letter code: A-type ATP synthase subunit B (467 aa).

Residues 95-114 (GKGQPRDHMPLPPPEDFRDV) are disordered.

The protein belongs to the ATPase alpha/beta chains family. Has multiple subunits with at least A(3), B(3), C, D, E, F, H, I and proteolipid K(x).

It is found in the cell membrane. Functionally, component of the A-type ATP synthase that produces ATP from ADP in the presence of a proton gradient across the membrane. The B chain is a regulatory subunit. The sequence is that of A-type ATP synthase subunit B from Pyrobaculum islandicum (strain DSM 4184 / JCM 9189 / GEO3).